A 669-amino-acid polypeptide reads, in one-letter code: L-type lectin-domain containing receptor kinase IV.4 (669 aa).

An N-terminal signal peptide occupies residues 1-23 (MFFIKLFTIFFLSFFWQSLKSSS). At 24–294 (QIIDFTYNGF…TRVYRFYKNW (271 aa)) the chain is on the extracellular side. A legume-lectin like region spans residues 26-260 (IDFTYNGFRP…SEIFVLGWSF (235 aa)). 5 N-linked (GlcNAc...) asparagine glycosylation sites follow: asparagine 58, asparagine 80, asparagine 127, asparagine 152, and asparagine 185. A helical membrane pass occupies residues 295–315 (VPLISLLLIPFLLIIFLVRFI). At 316–669 (MKRRRKFAEE…VAYSLLSSGR (354 aa)) the chain is on the cytoplasmic side. In terms of domain architecture, Protein kinase spans 350–627 (FKDKNILGSG…LQYLRGDAML (278 aa)). Residues 356 to 364 (LGSGGFGSV) and lysine 379 each bind ATP. Catalysis depends on aspartate 475, which acts as the Proton acceptor.

In the C-terminal section; belongs to the protein kinase superfamily. Ser/Thr protein kinase family. This sequence in the N-terminal section; belongs to the leguminous lectin family.

Its subcellular location is the cell membrane. The enzyme catalyses L-seryl-[protein] + ATP = O-phospho-L-seryl-[protein] + ADP + H(+). It carries out the reaction L-threonyl-[protein] + ATP = O-phospho-L-threonyl-[protein] + ADP + H(+). Its function is as follows. Involved in resistance response to the pathogenic oomycetes Phytophthora infestans and Phytophthora capsici and to the pathogenic bacteria Pseudomonas syringae. This chain is L-type lectin-domain containing receptor kinase IV.4, found in Arabidopsis thaliana (Mouse-ear cress).